The sequence spans 262 residues: 4-hydroxy-2-oxovalerate aldolase (262 aa).

H48 acts as the Proton acceptor in catalysis. Residue Q149 coordinates substrate. E151 is a binding site for Mg(2+). Residues A176 and D177 each contribute to the substrate site. Residue D177 coordinates Mg(2+).

It belongs to the HpcH/HpaI aldolase family.

The catalysed reaction is (S)-4-hydroxy-2-oxopentanoate = acetaldehyde + pyruvate. It participates in xenobiotic degradation; biphenyl degradation. Functionally, catalyzes the reversible retro-aldol cleavage of 4-hydroxy-2-oxovalerate to pyruvate and acetaldehyde. This Novosphingobium aromaticivorans (Sphingomonas aromaticivorans) protein is 4-hydroxy-2-oxovalerate aldolase (bphF).